The following is a 182-amino-acid chain: Large ribosomal subunit protein bL17m (182 aa).

The protein belongs to the bacterial ribosomal protein bL17 family.

The protein resides in the mitochondrion. This Dictyostelium discoideum (Social amoeba) protein is Large ribosomal subunit protein bL17m (mrpl17).